A 453-amino-acid chain; its full sequence is Cytochrome b-c1 complex subunit 2, mitochondrial (453 aa).

Residues 1–14 constitute a mitochondrion transit peptide; sequence MKLLSRAGSFSRFY. Lys66, Lys199, and Lys250 each carry N6-acetyllysine. A Phosphoserine modification is found at Ser368.

The protein belongs to the peptidase M16 family. UQCRC2/QCR2 subfamily. In terms of assembly, component of the ubiquinol-cytochrome c oxidoreductase (cytochrome b-c1 complex, complex III, CIII), a multisubunit enzyme composed of 11 subunits. The complex is composed of 3 respiratory subunits cytochrome b, cytochrome c1 and Rieske protein UQCRFS1, 2 core protein subunits UQCRC1/QCR1 and UQCRC2/QCR2, and 6 low-molecular weight protein subunits UQCRH/QCR6, UQCRB/QCR7, UQCRQ/QCR8, UQCR10/QCR9, UQCR11/QCR10 and subunit 9, the cleavage product of Rieske protein UQCRFS1. The complex exists as an obligatory dimer and forms supercomplexes (SCs) in the inner mitochondrial membrane with NADH-ubiquinone oxidoreductase (complex I, CI) and cytochrome c oxidase (complex IV, CIV), resulting in different assemblies (supercomplex SCI(1)III(2)IV(1) and megacomplex MCI(2)III(2)IV(2)). Interacts with RAB5IF. Interacts with STMP1. In terms of processing, acetylation of Lys-159 and Lys-250 is observed in liver mitochondria from fasted mice but not from fed mice. As to expression, expressed in neurons and astrocytes of the cerebral cortex and hippocampus (at protein level).

It localises to the mitochondrion inner membrane. Functionally, component of the ubiquinol-cytochrome c oxidoreductase, a multisubunit transmembrane complex that is part of the mitochondrial electron transport chain which drives oxidative phosphorylation. The respiratory chain contains 3 multisubunit complexes succinate dehydrogenase (complex II, CII), ubiquinol-cytochrome c oxidoreductase (cytochrome b-c1 complex, complex III, CIII) and cytochrome c oxidase (complex IV, CIV), that cooperate to transfer electrons derived from NADH and succinate to molecular oxygen, creating an electrochemical gradient over the inner membrane that drives transmembrane transport and the ATP synthase. The cytochrome b-c1 complex catalyzes electron transfer from ubiquinol to cytochrome c, linking this redox reaction to translocation of protons across the mitochondrial inner membrane, with protons being carried across the membrane as hydrogens on the quinol. In the process called Q cycle, 2 protons are consumed from the matrix, 4 protons are released into the intermembrane space and 2 electrons are passed to cytochrome c. The 2 core subunits UQCRC1/QCR1 and UQCRC2/QCR2 are homologous to the 2 mitochondrial-processing peptidase (MPP) subunits beta-MPP and alpha-MPP respectively, and they seem to have preserved their MPP processing properties. May be involved in the in situ processing of UQCRFS1 into the mature Rieske protein and its mitochondrial targeting sequence (MTS)/subunit 9 when incorporated into complex III. The chain is Cytochrome b-c1 complex subunit 2, mitochondrial (Uqcrc2) from Mus musculus (Mouse).